Consider the following 972-residue polypeptide: Hyaluronan synthase (972 aa).

The segment at 152–325 (KPEHQHVGLS…VSLDWRLEQF (174 aa)) is A1. The A2 stretch occupies residues 432–604 (EDSHINRVPL…IRAWHLTDGF (173 aa)).

This sequence belongs to the glycosyltransferase 2 family. CS/HAS subfamily. Requires Mg(2+) as cofactor. It depends on Co(2+) as a cofactor.

Its subcellular location is the cell membrane. It catalyses the reaction [hyaluronan](n) + UDP-N-acetyl-alpha-D-glucosamine = N-acetyl-beta-D-glucosaminyl-(1-&gt;4)-[hyaluronan](n) + UDP + H(+). The enzyme catalyses N-acetyl-beta-D-glucosaminyl-(1-&gt;4)-[hyaluronan](n) + UDP-alpha-D-glucuronate = [hyaluronan](n+1) + UDP + H(+). The catalysed reaction is 3-O-(beta-D-GalNAc-(1-&gt;4)-beta-D-GlcA-(1-&gt;3)-beta-D-Gal-(1-&gt;3)-beta-D-Gal-(1-&gt;4)-beta-D-Xyl)-L-seryl-[protein] + UDP-alpha-D-glucuronate = 3-O-(beta-D-GlcA-(1-&gt;3)-beta-D-GalNAc-(1-&gt;4)-beta-D-GlcA-(1-&gt;3)-beta-D-Gal-(1-&gt;3)-beta-D-Gal-(1-&gt;4)-beta-D-Xyl)-L-seryl-[protein] + UDP + H(+). It carries out the reaction 3-O-{[beta-D-GalNAc-(1-&gt;4)-beta-D-GlcA-(1-&gt;3)](n)-beta-D-GalNAc-(1-&gt;4)-beta-D-GlcA-(1-&gt;3)-beta-D-Gal-(1-&gt;3)-beta-D-Gal-(1-&gt;4)-beta-D-Xyl}-L-seryl-[protein] + UDP-alpha-D-glucuronate = 3-O-{beta-D-GlcA-(1-&gt;3)-[beta-D-GalNAc-(1-&gt;4)-beta-D-GlcA-(1-&gt;3)](n)-beta-D-GalNAc-(1-&gt;4)-beta-D-GlcA-(1-&gt;3)-beta-D-Gal-(1-&gt;3)-beta-D-Gal-(1-&gt;4)-beta-D-Xyl}-L-seryl-[protein] + UDP + H(+). Its function is as follows. Catalyzes the polymerization of hyaluronan, a polysaccharide composed of a repeating disaccharide of N-acetylglucosamine (GlcNAc) and glucuronic acid (GlcUA) units. Each unit has the composition in beta-(1-&gt;4)-GlcUA-beta-(1-&gt;3)-GlcNAc. The polypeptide is Hyaluronan synthase (hyaD) (Pasteurella multocida).